Consider the following 199-residue polypeptide: Recombination protein RecR (199 aa).

The C4-type zinc finger occupies 57-72 (CQACRTFTEETLCPIC). Residues 81-176 (EVICVVETPA…SVSRIAHGVP (96 aa)) enclose the Toprim domain.

It belongs to the RecR family.

Functionally, may play a role in DNA repair. It seems to be involved in an RecBC-independent recombinational process of DNA repair. It may act with RecF and RecO. This chain is Recombination protein RecR, found in Shewanella woodyi (strain ATCC 51908 / MS32).